A 182-amino-acid polypeptide reads, in one-letter code: Ribosome maturation factor RimM (182 aa).

Residues 103-182 enclose the PRC barrel domain; the sequence is DGSYYWKDLM…TIEVDWDPGF (80 aa).

This sequence belongs to the RimM family. Binds ribosomal protein uS19.

It localises to the cytoplasm. Its function is as follows. An accessory protein needed during the final step in the assembly of 30S ribosomal subunit, possibly for assembly of the head region. Essential for efficient processing of 16S rRNA. May be needed both before and after RbfA during the maturation of 16S rRNA. It has affinity for free ribosomal 30S subunits but not for 70S ribosomes. This chain is Ribosome maturation factor RimM, found in Citrobacter koseri (strain ATCC BAA-895 / CDC 4225-83 / SGSC4696).